The sequence spans 354 residues: tRNA N6-adenosine threonylcarbamoyltransferase (354 aa).

The a divalent metal cation site is built by H121, H125, and Y142. Substrate-binding positions include 142 to 146 (YVSGG), D174, G189, E193, and N285. D313 provides a ligand contact to a divalent metal cation.

It belongs to the KAE1 / TsaD family. Component of the EKC/KEOPS complex composed of at least bud32, cgi121, gon7, kae1 and pcc1; the whole complex dimerizes. Requires a divalent metal cation as cofactor.

It localises to the cytoplasm. The protein localises to the nucleus. The enzyme catalyses L-threonylcarbamoyladenylate + adenosine(37) in tRNA = N(6)-L-threonylcarbamoyladenosine(37) in tRNA + AMP + H(+). Component of the EKC/KEOPS complex that is required for the formation of a threonylcarbamoyl group on adenosine at position 37 (t(6)A37) in tRNAs that read codons beginning with adenine. The complex is probably involved in the transfer of the threonylcarbamoyl moiety of threonylcarbamoyl-AMP (TC-AMP) to the N6 group of A37. Kae1 likely plays a direct catalytic role in this reaction, but requires other protein(s) of the complex to fulfill this activity. The EKC/KEOPS complex also promotes both telomere uncapping and telomere elongation. The complex is required for efficient recruitment of transcriptional coactivators. The polypeptide is tRNA N6-adenosine threonylcarbamoyltransferase (gpe-1) (Neurospora crassa (strain ATCC 24698 / 74-OR23-1A / CBS 708.71 / DSM 1257 / FGSC 987)).